The primary structure comprises 140 residues: Large ribosomal subunit protein uL16c (140 aa).

This sequence belongs to the universal ribosomal protein uL16 family. Part of the 50S ribosomal subunit.

It is found in the plastid. The protein localises to the chloroplast. This is Large ribosomal subunit protein uL16c from Psilotum nudum (Whisk fern).